The primary structure comprises 746 residues: Chitin biosynthesis protein CHS6 (746 aa).

The segment at 1–25 (MNLFWPSETKKQNEIPGGDYTPGNS) is disordered. Residues 734-746 (LAWIADLDHTVQP) are CHS5-binding.

It belongs to the CHAPS family. In terms of assembly, component of the CHS5/6 complex composed of the 4 CHAPS proteins BCH1, BCH2, BUD7, and CHS6 as well as at least CHS5 and GTP-bound ARF1. The complex interacts with the cargo protein CHS3.

The protein localises to the golgi apparatus. Its subcellular location is the trans-Golgi network membrane. Its function is as follows. Member of the CHS5-ARF1P-binding proteins (CHAPS) which mediates export of specific cargo proteins, including chitin synthase CHS3. This is Chitin biosynthesis protein CHS6 (CHS6) from Saccharomyces cerevisiae (strain ATCC 204508 / S288c) (Baker's yeast).